Consider the following 384-residue polypeptide: Carbazole 1,9a-dioxygenase, terminal oxygenase component CarAa (384 aa).

A Rieske domain is found at 29–135 (WYPVMFSKEI…VQEAKGCVFI (107 aa)). Residues Cys69, His71, Cys90, and His93 each coordinate [2Fe-2S] cluster.

Homotrimer. Carbazole 1,9a-dioxygenase complex consists of a terminal oxygenase component CarAa, a ferredoxin reductase component CarAd and a ferredoxin component CarAc. Requires [2Fe-2S] cluster as cofactor.

The enzyme catalyses 9H-carbazole + NADH + O2 + H(+) = 2'-aminobiphenyl-2,3-diol + NAD(+). It carries out the reaction 9H-carbazole + NADPH + O2 + H(+) = 2'-aminobiphenyl-2,3-diol + NADP(+). Its function is as follows. Part of the multicomponent carbazole 1,9a-dioxygenase (CARDO), that converts carbazole (CAR) into 2-aminobiphenyl-2,3-diol. Catalyzes the dioxygenation at the angular (C-9a) and adjacent (C-1) positions of carbazole to yield a highly unstable cis-hydrodiol intermediate which is spontaneously converted to 2-aminobiphenyl-2,3-diol. It is also able to attack the angular position adjacent of hetero atom of heterocyclic aromatic compounds such as polychlorinated dibenzo-p-dioxin (DD) and dibenzofuran (DBF). It was also shown that CARDO has the ability to metabolize biphenyl and polycyclic aromatic hydrocarbons, such as naphthalene and phenanthrene. In Metapseudomonas resinovorans (Pseudomonas resinovorans), this protein is Carbazole 1,9a-dioxygenase, terminal oxygenase component CarAa (carAa).